A 794-amino-acid chain; its full sequence is Protein transport protein SEC23 G (794 aa).

Zn(2+) is bound by residues Cys56, Cys59, Cys78, and Cys81. Residues 56 to 81 (CSRCGAVLNPYARVDYQSRIWSCPFC) are zinc finger-like.

Belongs to the SEC23/SEC24 family. SEC23 subfamily. As to quaternary structure, component of the coat protein complex II (COPII), composed of at least five proteins: the Sec23/24 complex, the Sec13/31 complex and Sar1. Interacts with SEC24A.

It is found in the cytoplasmic vesicle. It localises to the COPII-coated vesicle membrane. The protein localises to the endoplasmic reticulum membrane. Its subcellular location is the membrane. In terms of biological role, component of the coat protein complex II (COPII) which promotes the formation of transport vesicles from the endoplasmic reticulum (ER). The coat has two main functions, the physical deformation of the endoplasmic reticulum membrane into vesicles and the selection of cargo molecules. The chain is Protein transport protein SEC23 G from Arabidopsis thaliana (Mouse-ear cress).